The following is a 311-amino-acid chain: Nudix hydrolase 9 (311 aa).

A Nudix hydrolase domain is found at Ser131 to Gln298. The short motif at Leu192–Gly213 is the Nudix box element. Residues Glu207 and Glu211 each coordinate Mg(2+).

Belongs to the Nudix hydrolase family. It depends on Mg(2+) as a cofactor. Mn(2+) serves as cofactor. As to expression, expressed in roots, stems and leaves.

Its function is as follows. Probably mediates the hydrolysis of some nucleoside diphosphate derivatives. This Arabidopsis thaliana (Mouse-ear cress) protein is Nudix hydrolase 9 (NUDT9).